Here is a 515-residue protein sequence, read N- to C-terminus: Germ cell-less protein-like 1 (515 aa).

The segment at 1 to 35 is disordered; that stretch reads MGSLSSRVLRQPRPALAQQAQGARAGGSARRPDTG. Over residues 11 to 29 the composition is skewed to low complexity; the sequence is QPRPALAQQAQGARAGGSA. The short motif at 49-55 is the Nuclear localization signal element; that stretch reads SHKRKRS. The disordered stretch occupies residues 65–85; that stretch reads DSETDEDEEEGDEQQRLLNTP. Ser-66 is modified (phosphoserine). Over residues 67-76 the composition is skewed to acidic residues; that stretch reads ETDEDEEEGD. Thr-68 bears the Phosphothreonine mark. Positions 85–91 match the Nuclear localization signal motif; it reads PRRKKLK. The region spanning 108–178 is the BTB domain; the sequence is SDIKICALGE…LYRDDVLIKP (71 aa).

In terms of assembly, interacts with TMPO-beta, TSG101 and TFDP2. Interacts with EMD.

It localises to the nucleus matrix. Functionally, possible function in spermatogenesis. Enhances the degradation of MDM2 and increases the amount of p53 probably by modulating the nucleocytoplasmic transport. This chain is Germ cell-less protein-like 1 (GMCL1), found in Homo sapiens (Human).